Reading from the N-terminus, the 162-residue chain is Zinc finger protein 593 homolog (162 aa).

The C2H2-type zinc-finger motif lies at 59–83; that stretch reads FYCVHCAKYFIDDTAMQAHFRTKVH. The interval 110–162 is disordered; sequence VKPKKRAMETQPSKEDVVAGKRIRVEVVPEDTDATDSPSTSKTKRKKVEKMET. The segment covering 115-136 has biased composition (basic and acidic residues); that stretch reads RAMETQPSKEDVVAGKRIRVEV. Positions 151–162 are enriched in basic residues; it reads KTKRKKVEKMET.

It belongs to the ZNF593/BUD20 C2H2-type zinc-finger protein family. In terms of assembly, associates with pre-60S ribosomal particles; released from the pre-60S particle very early in the cytoplasm.

The protein localises to the nucleus. It is found in the cytoplasm. Its function is as follows. Involved in pre-60S ribosomal particles maturation by promoting the nuclear export of the 60S ribosome. This chain is Zinc finger protein 593 homolog, found in Drosophila melanogaster (Fruit fly).